The primary structure comprises 436 residues: 3-ketoacyl-CoA thiolase (436 aa).

Cysteine 99 acts as the Acyl-thioester intermediate in catalysis. Catalysis depends on proton acceptor residues histidine 392 and cysteine 422.

The protein belongs to the thiolase-like superfamily. Thiolase family. In terms of assembly, heterotetramer of two alpha chains (FadJ) and two beta chains (FadI).

It localises to the cytoplasm. The catalysed reaction is an acyl-CoA + acetyl-CoA = a 3-oxoacyl-CoA + CoA. It participates in lipid metabolism; fatty acid beta-oxidation. Functionally, catalyzes the final step of fatty acid oxidation in which acetyl-CoA is released and the CoA ester of a fatty acid two carbons shorter is formed. The polypeptide is 3-ketoacyl-CoA thiolase (Escherichia coli (strain ATCC 8739 / DSM 1576 / NBRC 3972 / NCIMB 8545 / WDCM 00012 / Crooks)).